A 448-amino-acid chain; its full sequence is Homogentisate 1,2-dioxygenase (448 aa).

His-303 acts as the Proton acceptor in catalysis. Residues His-346 and Glu-352 each contribute to the Fe cation site. Homogentisate is bound by residues Tyr-361 and His-382. His-382 provides a ligand contact to Fe cation.

This sequence belongs to the homogentisate dioxygenase family. In terms of assembly, hexamer; dimer of trimers. Requires Fe cation as cofactor.

It catalyses the reaction homogentisate + O2 = 4-maleylacetoacetate + H(+). The protein operates within amino-acid degradation; L-phenylalanine degradation; acetoacetate and fumarate from L-phenylalanine: step 4/6. In terms of biological role, involved in the catabolism of homogentisate (2,5-dihydroxyphenylacetate or 2,5-OH-PhAc), a central intermediate in the degradation of phenylalanine and tyrosine. Catalyzes the oxidative ring cleavage of the aromatic ring of homogentisate to yield maleylacetoacetate. This chain is Homogentisate 1,2-dioxygenase, found in Rhodopseudomonas palustris (strain BisB5).